The following is a 279-amino-acid chain: Shikimate dehydrogenase (NADP(+)) (279 aa).

Residues 20–22 (SRS) and threonine 67 each bind shikimate. The active-site Proton acceptor is lysine 71. Aspartate 83 provides a ligand contact to NADP(+). Residues asparagine 92 and aspartate 108 each contribute to the shikimate site. NADP(+) is bound by residues 134 to 138 (GAGGA) and leucine 223. Tyrosine 225 serves as a coordination point for shikimate. Glycine 246 serves as a coordination point for NADP(+).

The protein belongs to the shikimate dehydrogenase family. As to quaternary structure, homodimer.

It catalyses the reaction shikimate + NADP(+) = 3-dehydroshikimate + NADPH + H(+). Its pathway is metabolic intermediate biosynthesis; chorismate biosynthesis; chorismate from D-erythrose 4-phosphate and phosphoenolpyruvate: step 4/7. Functionally, involved in the biosynthesis of the chorismate, which leads to the biosynthesis of aromatic amino acids. Catalyzes the reversible NADPH linked reduction of 3-dehydroshikimate (DHSA) to yield shikimate (SA). The chain is Shikimate dehydrogenase (NADP(+)) from Cereibacter sphaeroides (strain ATCC 17029 / ATH 2.4.9) (Rhodobacter sphaeroides).